Here is a 334-residue protein sequence, read N- to C-terminus: Glycerol-3-phosphate dehydrogenase [NAD(P)+] (334 aa).

Positions 14, 34, and 107 each coordinate NADPH. Sn-glycerol 3-phosphate-binding residues include Lys-107 and Gly-135. NADPH is bound at residue Ala-139. 5 residues coordinate sn-glycerol 3-phosphate: Lys-190, Asp-243, Ser-253, Arg-254, and Asn-255. Lys-190 acts as the Proton acceptor in catalysis. Arg-254 serves as a coordination point for NADPH. Residues Val-272 and Glu-273 each contribute to the NADPH site.

This sequence belongs to the NAD-dependent glycerol-3-phosphate dehydrogenase family.

The protein resides in the cytoplasm. It carries out the reaction sn-glycerol 3-phosphate + NAD(+) = dihydroxyacetone phosphate + NADH + H(+). It catalyses the reaction sn-glycerol 3-phosphate + NADP(+) = dihydroxyacetone phosphate + NADPH + H(+). The protein operates within membrane lipid metabolism; glycerophospholipid metabolism. Functionally, catalyzes the reduction of the glycolytic intermediate dihydroxyacetone phosphate (DHAP) to sn-glycerol 3-phosphate (G3P), the key precursor for phospholipid synthesis. This is Glycerol-3-phosphate dehydrogenase [NAD(P)+] from Neorickettsia sennetsu (strain ATCC VR-367 / Miyayama) (Ehrlichia sennetsu).